We begin with the raw amino-acid sequence, 397 residues long: Cathepsin E-A (397 aa).

The first 16 residues, 1–16 (MRQILVLLLFATLVYG), serve as a signal peptide directing secretion. Residues 17-52 (LIRVPLKRQKSIRKTLKEKGKLSHIWTQQGIDMVQY) constitute a propeptide, activation peptide. In terms of domain architecture, Peptidase A1 spans 74–385 (YFGEISVGTP…DRGNNRVGLA (312 aa)). N-linked (GlcNAc...) asparagine glycosylation occurs at asparagine 86. Aspartate 92 is a catalytic residue. A disulfide bridge connects residues cysteine 105 and cysteine 110. Asparagine 130 carries an N-linked (GlcNAc...) asparagine glycan. A disulfide bridge connects residues cysteine 268 and cysteine 272. Residue aspartate 277 is part of the active site. Residues cysteine 310 and cysteine 344 are joined by a disulfide bond.

This sequence belongs to the peptidase A1 family. As to quaternary structure, homodimer; disulfide-linked. In terms of processing, glycosylated. Contains high mannose-type oligosaccharide. In terms of tissue distribution, expressed predominantly in the larval foregut and the anterior and posterior adult stomach.

Its subcellular location is the endosome. It carries out the reaction Similar to cathepsin D, but slightly broader specificity.. Functionally, may have a role in immune function. Probably involved in the processing of antigenic peptides during MHC class II-mediated antigen presentation. This chain is Cathepsin E-A (ctse-a), found in Xenopus laevis (African clawed frog).